Reading from the N-terminus, the 1214-residue chain is ATP-dependent helicase/nuclease subunit A (1214 aa).

The 457-residue stretch at 27–483 folds into the UvrD-like helicase ATP-binding domain; it reads HKRTAQQIEA…ILLKENFRSQ (457 aa). Position 48–55 (48–55) interacts with ATP; sequence ASAGSGKT. Positions 512–800 constitute a UvrD-like helicase C-terminal domain; sequence QLVAGSEAQK…NLMTIHKSKG (289 aa).

This sequence belongs to the helicase family. AddA subfamily. Heterodimer of AddA and AddB/RexB. Mg(2+) is required as a cofactor.

The enzyme catalyses Couples ATP hydrolysis with the unwinding of duplex DNA by translocating in the 3'-5' direction.. It carries out the reaction ATP + H2O = ADP + phosphate + H(+). The heterodimer acts as both an ATP-dependent DNA helicase and an ATP-dependent, dual-direction single-stranded exonuclease. Recognizes the chi site generating a DNA molecule suitable for the initiation of homologous recombination. The AddA nuclease domain is required for chi fragment generation; this subunit has the helicase and 3' -&gt; 5' nuclease activities. This is ATP-dependent helicase/nuclease subunit A from Streptococcus equi subsp. zooepidemicus (strain MGCS10565).